The sequence spans 133 residues: Transcriptional regulator MraZ (133 aa).

SpoVT-AbrB domains lie at 5-47 (TYEH…SKDD) and 76-119 (TVEI…SKNK).

This sequence belongs to the MraZ family. In terms of assembly, forms oligomers.

The protein resides in the cytoplasm. It localises to the nucleoid. This is Transcriptional regulator MraZ from Mycoplasma mycoides subsp. mycoides SC (strain CCUG 32753 / NCTC 10114 / PG1).